Here is a 944-residue protein sequence, read N- to C-terminus: Translation initiation factor IF-2 (944 aa).

Disordered regions lie at residues 50-91 (SAKT…FAGK) and 114-349 (KVEV…VPAT). Basic and acidic residues-rich tracts occupy residues 75–86 (ESAKKNKEDHPR), 124–157 (VVTE…ETKD), 164–185 (AEVK…EKKK), and 199–233 (KRAE…DNRR). Residues 267 to 280 (SSGSAPATDSFTPA) are compositionally biased toward polar residues. Residues 286-307 (SRRDRDRKKSDNNRDNTKDGNR) are compositionally biased toward basic and acidic residues. 2 stretches are compositionally biased toward polar residues: residues 317–331 (NRNQ…NWNQ) and 338–348 (YQNNQSSSVPA). One can recognise a tr-type G domain in the interval 443–614 (ERPAVVTIMG…LLVAEVQELK (172 aa)). The G1 stretch occupies residues 452–459 (GHVDHGKT). Residue 452-459 (GHVDHGKT) coordinates GTP. The G2 stretch occupies residues 477–481 (GITQH). A G3 region spans residues 498–501 (DTPG). GTP-binding positions include 498-502 (DTPGH) and 552-555 (NKID). Residues 552-555 (NKID) form a G4 region. The interval 590-592 (SAK) is G5.

The protein belongs to the TRAFAC class translation factor GTPase superfamily. Classic translation factor GTPase family. IF-2 subfamily.

It localises to the cytoplasm. Its function is as follows. One of the essential components for the initiation of protein synthesis. Protects formylmethionyl-tRNA from spontaneous hydrolysis and promotes its binding to the 30S ribosomal subunits. Also involved in the hydrolysis of GTP during the formation of the 70S ribosomal complex. The protein is Translation initiation factor IF-2 (infB) of Lactococcus lactis subsp. lactis (strain IL1403) (Streptococcus lactis).